The sequence spans 143 residues: Transcriptional regulator MraZ (143 aa).

2 consecutive SpoVT-AbrB domains span residues 5 to 47 (EYLH…PLDE) and 76 to 119 (ATEC…SQAL).

This sequence belongs to the MraZ family. As to quaternary structure, forms oligomers.

The protein localises to the cytoplasm. Its subcellular location is the nucleoid. This is Transcriptional regulator MraZ from Desulfitobacterium hafniense (strain DSM 10664 / DCB-2).